The sequence spans 139 residues: MLIPKRTKYRKQHRPVRSGMSKGGNEINFGDFAIQSLAPAYVTNRQIEAARIAMTRYIKRGGRVWITIFPDRPLTKHPLGARMGSGKGAPEFWIANVRPGRVMFEIGGVSEDIAKEALRRAIDKLPMKCRIIAREGGDI.

Over residues 1 to 16 (MLIPKRTKYRKQHRPV) the composition is skewed to basic residues. The disordered stretch occupies residues 1–22 (MLIPKRTKYRKQHRPVRSGMSK).

Belongs to the universal ribosomal protein uL16 family. Part of the 50S ribosomal subunit.

Functionally, binds 23S rRNA and is also seen to make contacts with the A and possibly P site tRNAs. The polypeptide is Large ribosomal subunit protein uL16 (Bifidobacterium longum (strain DJO10A)).